The sequence spans 262 residues: Phosphonates import ATP-binding protein PhnC (262 aa).

One can recognise an ABC transporter domain in the interval 5–253 (IRVEKLAKTF…RFDHLYRSIN (249 aa)). ATP is bound at residue 37 to 44 (GPSGSGKS).

This sequence belongs to the ABC transporter superfamily. Phosphonates importer (TC 3.A.1.9.1) family. In terms of assembly, the complex is composed of two ATP-binding proteins (PhnC), two transmembrane proteins (PhnE) and a solute-binding protein (PhnD).

The protein localises to the cell inner membrane. It catalyses the reaction phosphonate(out) + ATP + H2O = phosphonate(in) + ADP + phosphate + H(+). Part of the ABC transporter complex PhnCDE involved in phosphonates import. Responsible for energy coupling to the transport system. This Shigella dysenteriae serotype 1 (strain Sd197) protein is Phosphonates import ATP-binding protein PhnC.